We begin with the raw amino-acid sequence, 499 residues long: Endoglucanase (499 aa).

The signal sequence occupies residues 1–29 (MKRSISIFITCLLIAVLTMGGLLPSPASA). Substrate-binding positions include His-65, 69 to 70 (WY), Tyr-96, and His-131. Catalysis depends on Glu-169, which acts as the Proton donor. Position 231 (Tyr-231) interacts with substrate. Glu-257 acts as the Nucleophile in catalysis. Residues 263–264 (AS), Trp-291, and 296–298 (KQE) contribute to the substrate site. The segment covering 330–340 (RGTKDSTKDVP) has biased composition (basic and acidic residues). A disordered region spans residues 330-353 (RGTKDSTKDVPETPAQDNPTQEKG). The CBM3 domain occupies 350-499 (QEKGVSVQYK…GKLIWGTEPN (150 aa)).

This sequence belongs to the glycosyl hydrolase 5 (cellulase A) family.

It catalyses the reaction Endohydrolysis of (1-&gt;4)-beta-D-glucosidic linkages in cellulose, lichenin and cereal beta-D-glucans.. This chain is Endoglucanase (bglC), found in Bacillus subtilis.